The following is a 434-amino-acid chain: Ribulose bisphosphate carboxylase-like protein (434 aa).

Lys-198, Asp-200, and Glu-201 together coordinate Mg(2+). Lys-198 carries the N6-carboxylysine modification.

The protein belongs to the RuBisCO large chain family. Type IV subfamily. Homodimer. Requires Mg(2+) as cofactor.

May be involved in sulfur metabolism and oxidative stress response. Does not show RuBisCO activity. The sequence is that of Ribulose bisphosphate carboxylase-like protein from Chlorobaculum thiosulfatiphilum (Chlorobium limicola f.sp. thiosulfatophilum).